A 442-amino-acid polypeptide reads, in one-letter code: Hydrolase phmG (442 aa).

Residue Ser-259 is the Nucleophile of the active site.

Belongs to the AB hydrolase superfamily. FUS2 hydrolase family. Homodimer.

Its pathway is mycotoxin biosynthesis. Hydrolyase; part of the gene cluster that mediates the biosynthesis of the mycotoxins phomacins, leucine-derived cytochalasans with potent actin polymerization-inhibitory activities and monocot-specific antigerminative activities. The first step in the pathway is catalyzed by the hybrid PKS-NRPS phmA, assisted by the enoyl reductase phmE, that are responsible for fusion of the leucine precursor and the polyketide backbone to produce a 2-pyrrolidone intermediate. The polyketide synthase module (PKS) of phmA is responsible for the synthesis of the polyketide backbone and the downstream nonribosomal peptide synthetase (NRPS) amidates the carboxyl end of the polyketide with the leucine precursor. Because phmA lacks a designated enoylreductase (ER) domain, the required activity is provided the enoyl reductase phmE. Reduction by the hydrolyase phmG, followed by dehydration and intra-molecular Diels-Alder cyclization by the Diels-Alderase phmD then yield the required isoindolone-fused macrocycle. A number of oxidative steps catalyzed by the tailoring cytochrome P450 monooxygenase phmB, the FAD-linked oxidoreductase phmC and the short-chain dehydrogenase/reductase phmF, are further required to afford the final products, phomacin D and phomacin E. This Phaeosphaeria nodorum (strain SN15 / ATCC MYA-4574 / FGSC 10173) (Glume blotch fungus) protein is Hydrolase phmG.